The following is a 361-amino-acid chain: MFLELINFITQFDTKFNVLNYLTIRALLAMLSALFIGLMLGRIFIKRLQQCHINQVIRTDGPKSHLIKVGTPTMGGILILFAFIVSILIWGDWSNIYLWIIIVTSIIFSAIGFTDDYLKIKHKSSNGLSSSIKFLTQSLSAIVISTWIILISQKTTQPQLLIPFFNDIILPLSVFDFLILSYFVIVGSSNAVNLTDGLDGLAIMSVILISGALAIFAYFSGNYNFSNYLNMPYITGINELFIICAALIGSSLGFLWFNAYPAEIFMGDVGSLSLGAILAVIAILIRQEILLFIMGGVFVAETLSVIIQVGYYKLYKKRIFLMTPLHHHFEKQNISEPKIIVRFWIVTLILVLIGLASIKIH.

A run of 10 helical transmembrane segments spans residues 21 to 41 (YLTI…LMLG), 69 to 89 (VGTP…SILI), 93 to 113 (WSNI…AIGF), 131 to 151 (SIKF…IILI), 168 to 188 (IILP…IVGS), 200 to 220 (GLAI…AYFS), 240 to 260 (LFII…FNAY), 264 to 284 (IFMG…IAIL), 289 to 309 (ILLF…IIQV), and 338 to 358 (KIIV…LASI).

Belongs to the glycosyltransferase 4 family. MraY subfamily. Mg(2+) serves as cofactor.

Its subcellular location is the cell inner membrane. The catalysed reaction is UDP-N-acetyl-alpha-D-muramoyl-L-alanyl-gamma-D-glutamyl-meso-2,6-diaminopimeloyl-D-alanyl-D-alanine + di-trans,octa-cis-undecaprenyl phosphate = di-trans,octa-cis-undecaprenyl diphospho-N-acetyl-alpha-D-muramoyl-L-alanyl-D-glutamyl-meso-2,6-diaminopimeloyl-D-alanyl-D-alanine + UMP. It participates in cell wall biogenesis; peptidoglycan biosynthesis. Catalyzes the initial step of the lipid cycle reactions in the biosynthesis of the cell wall peptidoglycan: transfers peptidoglycan precursor phospho-MurNAc-pentapeptide from UDP-MurNAc-pentapeptide onto the lipid carrier undecaprenyl phosphate, yielding undecaprenyl-pyrophosphoryl-MurNAc-pentapeptide, known as lipid I. This chain is Phospho-N-acetylmuramoyl-pentapeptide-transferase, found in Vesicomyosocius okutanii subsp. Calyptogena okutanii (strain HA).